Here is a 249-residue protein sequence, read N- to C-terminus: Triosephosphate isomerase (249 aa).

The substrate site is built by N12 and K14. K14 bears the N6-acetyllysine mark. Y68 is subject to 3'-nitrotyrosine. S80 bears the Phosphoserine mark. H96 serves as the catalytic Electrophile. S106 is modified (phosphoserine). K142 is covalently cross-linked (Glycyl lysine isopeptide (Lys-Gly) (interchain with G-Cter in SUMO1)). K149 carries the post-translational modification N6-succinyllysine. K156 carries the N6-acetyllysine; alternate modification. The residue at position 156 (K156) is an N6-succinyllysine; alternate. A Phosphoserine modification is found at S159. E166 functions as the Proton acceptor in the catalytic mechanism. Position 173 is a phosphothreonine (T173). N6-acetyllysine; alternate is present on K194. An N6-succinyllysine; alternate modification is found at K194. The residue at position 194 (K194) is an N6-methyllysine; alternate. A Phosphoserine modification is found at S198. 3'-nitrotyrosine is present on Y209. S212 is subject to Phosphoserine. The residue at position 214 (T214) is a Phosphothreonine. S223 is subject to Phosphoserine. At K238 the chain carries N6-acetyllysine.

Belongs to the triosephosphate isomerase family. In terms of assembly, homodimer.

The protein localises to the cytoplasm. It carries out the reaction dihydroxyacetone phosphate = methylglyoxal + phosphate. It catalyses the reaction D-glyceraldehyde 3-phosphate = dihydroxyacetone phosphate. The protein operates within carbohydrate degradation; glycolysis; D-glyceraldehyde 3-phosphate from glycerone phosphate: step 1/1. Its pathway is carbohydrate biosynthesis; gluconeogenesis. Its function is as follows. Triosephosphate isomerase is an extremely efficient metabolic enzyme that catalyzes the interconversion between dihydroxyacetone phosphate (DHAP) and D-glyceraldehyde-3-phosphate (G3P) in glycolysis and gluconeogenesis. It is also responsible for the non-negligible production of methylglyoxal a reactive cytotoxic side-product that modifies and can alter proteins, DNA and lipids. This is Triosephosphate isomerase (TPI1) from Canis lupus familiaris (Dog).